A 387-amino-acid polypeptide reads, in one-letter code: Ferrochelatase (387 aa).

Fe cation-binding residues include histidine 196 and glutamate 277.

It belongs to the ferrochelatase family.

It localises to the cytoplasm. It carries out the reaction heme b + 2 H(+) = protoporphyrin IX + Fe(2+). Its pathway is porphyrin-containing compound metabolism; protoheme biosynthesis; protoheme from protoporphyrin-IX: step 1/1. Functionally, catalyzes the ferrous insertion into protoporphyrin IX. The sequence is that of Ferrochelatase from Gloeothece citriformis (strain PCC 7424) (Cyanothece sp. (strain PCC 7424)).